A 260-amino-acid polypeptide reads, in one-letter code: Proteasome subunit alpha (260 aa).

The protein belongs to the peptidase T1A family. As to quaternary structure, the 20S proteasome core is composed of 14 alpha and 14 beta subunits that assemble into four stacked heptameric rings, resulting in a barrel-shaped structure. The two inner rings, each composed of seven catalytic beta subunits, are sandwiched by two outer rings, each composed of seven alpha subunits. The catalytic chamber with the active sites is on the inside of the barrel. Has a gated structure, the ends of the cylinder being occluded by the N-termini of the alpha-subunits. Is capped at one or both ends by the proteasome regulatory ATPase, PAN.

It localises to the cytoplasm. Its activity is regulated as follows. The formation of the proteasomal ATPase PAN-20S proteasome complex, via the docking of the C-termini of PAN into the intersubunit pockets in the alpha-rings, triggers opening of the gate for substrate entry. Interconversion between the open-gate and close-gate conformations leads to a dynamic regulation of the 20S proteasome proteolysis activity. Its function is as follows. Component of the proteasome core, a large protease complex with broad specificity involved in protein degradation. The sequence is that of Proteasome subunit alpha from Thermococcus onnurineus (strain NA1).